The chain runs to 122 residues: Large ribosomal subunit protein uL14c (122 aa).

Belongs to the universal ribosomal protein uL14 family. As to quaternary structure, part of the 50S ribosomal subunit.

It localises to the plastid. The protein localises to the chloroplast. In terms of biological role, binds to 23S rRNA. The polypeptide is Large ribosomal subunit protein uL14c (Marchantia polymorpha (Common liverwort)).